The sequence spans 942 residues: UvrABC system protein A (942 aa).

32–39 (GLSGSGKS) is a binding site for ATP. Residues 251-278 (CPVCGFTVPELEPRLFSFNAPFGSCPTC) form a C4-type zinc finger. 2 consecutive ABC transporter domains span residues 308 to 589 (WNPI…KKSI) and 609 to 937 (GNGR…HYLK). ATP is bound at residue 641–648 (GVSGSGKS). The segment at 740 to 766 (CEACSGDGIIKIEMHFLPDVYVPCEVC) adopts a C4-type zinc-finger fold.

The protein belongs to the ABC transporter superfamily. UvrA family. In terms of assembly, forms a heterotetramer with UvrB during the search for lesions.

The protein localises to the cytoplasm. Its function is as follows. The UvrABC repair system catalyzes the recognition and processing of DNA lesions. UvrA is an ATPase and a DNA-binding protein. A damage recognition complex composed of 2 UvrA and 2 UvrB subunits scans DNA for abnormalities. When the presence of a lesion has been verified by UvrB, the UvrA molecules dissociate. The sequence is that of UvrABC system protein A from Streptococcus pyogenes serotype M18 (strain MGAS8232).